The following is a 433-amino-acid chain: Glutamate-1-semialdehyde 2,1-aminomutase (433 aa).

K271 carries the N6-(pyridoxal phosphate)lysine modification.

The protein belongs to the class-III pyridoxal-phosphate-dependent aminotransferase family. HemL subfamily. In terms of assembly, homodimer. Pyridoxal 5'-phosphate serves as cofactor.

It localises to the cytoplasm. The enzyme catalyses (S)-4-amino-5-oxopentanoate = 5-aminolevulinate. It functions in the pathway porphyrin-containing compound metabolism; protoporphyrin-IX biosynthesis; 5-aminolevulinate from L-glutamyl-tRNA(Glu): step 2/2. The protein operates within porphyrin-containing compound metabolism; chlorophyll biosynthesis. This is Glutamate-1-semialdehyde 2,1-aminomutase from Prochlorococcus marinus (strain MIT 9301).